An 878-amino-acid chain; its full sequence is Glycogen [starch] synthase (878 aa).

Position 61 (Lys61) interacts with UDP-alpha-D-glucose. Disordered stretches follow at residues Pro637 to Pro721 and Asn746 to Lys878. Low complexity-rich tracts occupy residues Ile641–Ser656 and Gln666–Pro676. Residues Ile677–Val692 show a composition bias toward polar residues. Composition is skewed to low complexity over residues Thr693–Pro715, Asn746–Thr781, Pro795–Pro830, and Thr838–Lys878.

This sequence belongs to the glycosyltransferase 3 family.

It carries out the reaction [(1-&gt;4)-alpha-D-glucosyl](n) + UDP-alpha-D-glucose = [(1-&gt;4)-alpha-D-glucosyl](n+1) + UDP + H(+). It functions in the pathway glycan biosynthesis; glycogen biosynthesis. In terms of biological role, catalyzes the formation of apha-1,4 glycosidic bonds adding glucose residue from UDPG to the growing chain of glycogen. This is Glycogen [starch] synthase (glcS) from Dictyostelium discoideum (Social amoeba).